The following is a 158-amino-acid chain: Transcription elongation factor GreA (158 aa).

Belongs to the GreA/GreB family.

Necessary for efficient RNA polymerase transcription elongation past template-encoded arresting sites. The arresting sites in DNA have the property of trapping a certain fraction of elongating RNA polymerases that pass through, resulting in locked ternary complexes. Cleavage of the nascent transcript by cleavage factors such as GreA or GreB allows the resumption of elongation from the new 3'terminus. GreA releases sequences of 2 to 3 nucleotides. The polypeptide is Transcription elongation factor GreA (Rhizobium etli (strain ATCC 51251 / DSM 11541 / JCM 21823 / NBRC 15573 / CFN 42)).